The following is a 322-amino-acid chain: Germ cell-specific gene 1-like protein (322 aa).

The Cytoplasmic portion of the chain corresponds to 1–8 (MELSRRNR). Residues 9–29 (SLLSVVLNLLALSFSVAAFFT) form a helical membrane-spanning segment. Over 30 to 125 (SYWCEGTHKV…IELSPDSEKG (96 aa)) the chain is Extracellular. A helical transmembrane segment spans residues 126–146 (VLWLSVISEFLYIILLSLGFL). Topologically, residues 147–166 (LMCLEFFSSSNFIDGLKINA) are cytoplasmic. A helical transmembrane segment spans residues 167-187 (FAAIITVLSGLLGMVAHMMYM). Topologically, residues 188–209 (TVFQVTVNLGPKDWRPQTWYYG) are extracellular. A helical transmembrane segment spans residues 210-230 (WSFGLAWLSFTLCMSASVLTL). At 231–322 (NTYTKTILEF…MDLEDDGDQC (92 aa)) the chain is on the cytoplasmic side.

The protein belongs to the GSG1 family. As to quaternary structure, component of the AMPAR complex.

It localises to the cell membrane. The protein resides in the synapse. In terms of biological role, as a component of the AMPAR complex, modifies AMPA receptor (AMPAR) gating. The polypeptide is Germ cell-specific gene 1-like protein (gsg1l) (Xenopus tropicalis (Western clawed frog)).